The following is a 140-amino-acid chain: Large ribosomal subunit protein uL14x/uL14z/uL14y (140 aa).

The protein belongs to the universal ribosomal protein uL14 family.

This is Large ribosomal subunit protein uL14x/uL14z/uL14y (RPL23A) from Arabidopsis thaliana (Mouse-ear cress).